We begin with the raw amino-acid sequence, 427 residues long: Ceramide Synthase FUM18 (427 aa).

Asparagine 20 carries N-linked (GlcNAc...) asparagine glycosylation. Helical transmembrane passes span 38–58 (ILPLLTGFTLLAGVILLIHIS), 131–151 (EQGWILMYYSVFWPLGMLIWA), 173–193 (GLIKFYILTQLAYWIQQVISV), 202–222 (YWLNVVHHFITITLILLCYVY), 250–270 (YLGFTTLCDLVFFLFFVTWIV), and 335–355 (VSILAYLLLLQVLMMIWFGFI). A TLC domain is found at 124–364 (RKVVRFSEQG…ICKVAIGVLD (241 aa)). The disordered stretch occupies residues 373 to 406 (SDVESDEEDSEPVANGSGWQQSQLQPGRRVGSNG). N-linked (GlcNAc...) asparagine glycosylation is present at asparagine 387.

Belongs to the sphingosine N-acyltransferase family.

It localises to the endoplasmic reticulum membrane. Its pathway is mycotoxin biosynthesis. In terms of biological role, ceramide synthase; part of the gene cluster that mediates the biosynthesis of fumonisins B1 (FB1), B2 (FB2), B3 (FB3), and B4 (FB4), which are carcinogenic mycotoxins. Plays a role in self-protection from FB1 toxicity by contributing to ceramide synthesis. The biosynthesis starts with the FUM1-catalyzed carbon chain assembly from one molecule of acetyl-CoA, eight molecules of malonyl-CoA, and two molecules of methionine (in S-adenosyl form). The C18 polyketide chain is released from the enzyme by a nucleophilic attack of a carbanion, which is derived from R-carbon of alanine by decarboxylation, on the carbonyl carbon of polyketide acyl chain. This step is catalyzed by the pyridoxal 5'-phosphate-dependent aminoacyl transferase FUM8. The resultant 3-keto intermediate is then stereospecifically reduced to a 3-hydroxyl product by reductase FUM13. Subsequent oxidations at C-10 by the cytochrome P450 monooxygenase FUM2, C-14 and C-15 by FUM6, FUM12 or FUM15, tricarballylic esterification of the hydroxyl groups on C-14 and C-15 by acyltransferase FUM14, and C-5 hydroxylation by 2-keto-glutarate-dependent dioxygenase FUM3 furnish the biosynthesis of fumonisins. The tricarballylic moieties are most likely derived from the citric acid cycle, and their addition to the carbon backbone may involve FUM7, FUM10, FUM11 and FUM14. The polypeptide is Ceramide Synthase FUM18 (Gibberella moniliformis (strain M3125 / FGSC 7600) (Maize ear and stalk rot fungus)).